We begin with the raw amino-acid sequence, 494 residues long: MVLCFQDPDNIYSPKKTKKDDGERVITKQKSFLGLSILDISNPSSTTLSEDLSISLAGSDLHVFTQAELRVITQSFSSSNFLGEGGFGPVHKGFIDDKLRPGLKAQPVAVKLLDLDGLQGHREFMTEVMCLGKLKHPNLVKLIGYCCEEAHRLLVYEFMPRGSLESQLFRRCSLPLPWTTRLNIAYEAAKGLQFLHEAEKPIIYRDFKASNILLDSDYTAKLSDFGLAKDGPQGDDTHVSTRVMGTQGYAAPEYIMTGHLTAKSDVYSFGVVLLELLTGRKSVDIARSSRKETLVEWARPMLNDARKLGRIMDPRLEDQYSETGARKAATLAYQCLRYRPKTRPDISTVVSVLQDIKDYKDDIPIGIFTYTVPTKPRREVKETSLQNFDKPRRETKVTSLQNFDKTRREVKDTSLQNFDKTRREVKETSLQNFDKTRREVKETSLQNFDKPRNVSTTDNHQKFRSPAHTARNHRITLRNGYNSPMRNEAGGERY.

The S-palmitoyl cysteine moiety is linked to residue Cys4. The residue at position 65 (Thr65) is a Phosphothreonine. Positions 76 to 356 (FSSSNFLGEG…STVVSVLQDI (281 aa)) constitute a Protein kinase domain. ATP contacts are provided by residues 82–90 (LGEGGFGPV) and Lys111. Tyr156 bears the Phosphotyrosine mark. The active-site Proton acceptor is Asp206. Position 210 is a phosphoserine (Ser210). The residue at position 240 (Ser240) is a Phosphoserine; by autocatalysis. 2 positions are modified to phosphothreonine: Thr241 and Thr246. Tyr254 bears the Phosphotyrosine mark. Ser321 carries the post-translational modification Phosphoserine; by autocatalysis. Thr323 and Thr383 each carry phosphothreonine; by autocatalysis. At Ser384 the chain carries Phosphoserine; by autocatalysis. Phosphothreonine; by autocatalysis occurs at positions 395, 398, 406, 413, 421, and 428. A Phosphoserine; by autocatalysis modification is found at Ser429. Residues 434–471 (DKTRREVKETSLQNFDKPRNVSTTDNHQKFRSPAHTAR) form a disordered region. Thr443 is modified (phosphothreonine; by autocatalysis). Positions 443 to 458 (TSLQNFDKPRNVSTTD) are enriched in polar residues. Phosphoserine; by autocatalysis is present on residues Ser444 and Ser455. Thr456 bears the Phosphothreonine; by autocatalysis mark. Basic residues predominate over residues 462 to 471 (KFRSPAHTAR). Position 481 is a phosphotyrosine; by autocatalysis (Tyr481).

It belongs to the protein kinase superfamily. Ser/Thr protein kinase family. In terms of assembly, interacts with RBHOD. Interaction is disrupted by flagellin-induced immune signaling.

The protein localises to the cell membrane. It carries out the reaction L-seryl-[protein] + ATP = O-phospho-L-seryl-[protein] + ADP + H(+). The enzyme catalyses L-threonyl-[protein] + ATP = O-phospho-L-threonyl-[protein] + ADP + H(+). Functionally, involved in defense responses. Acts as a negative regulator of plant immune responses. This is Serine/threonine-protein kinase PBL13 from Arabidopsis thaliana (Mouse-ear cress).